Here is a 552-residue protein sequence, read N- to C-terminus: MSDMEKPWKEEEKREVLAGHARRQAPQAVDKGPVTGDQRISVTVVLRRQRGDELEAHVERQAALAPHARVHLEREAFAASHGASLDDFAEIRKFAEAHGLTLDRAHVAAGTAVLSGPVDAVNQAFGVELRHFDHPDGSYRSYVGDVRVPASIAPLIEAVFGLDTRPVARPHFRLRRRAEGEFEARSQSAAPTAYTPLDVAQAYQFPEGLDGQGQCIAIIELGGGYDETSLAQYFASLGVSAPQVVSVSVDGATNQPTGDPNGPDGEVELDIEVAGALAPGAKIAVYFAPNTDAGFLNAITTAVHDPTHKPSIVSISWGGPEDSWAPASIAAMNRAFLDAAALGVTVLAAAGDSGSTDGEQDGLYHVDFPAASPYVLACGGTRLVASAGRIERETVWNDGPDGGSTGGGVSRIFPLPSWQERANVPPSANPGAGSGRGVPDVAGNADPATGYEVVIDGETTVIGGTSAVAPLFAALVARINQKLGKPVGYLNPTLYQLPPEVFHDITEGNNDIANRARIYQAGPGWDPCTGLGSPIGIRLLQALLPSASQAQP.

The segment covering 1 to 17 (MSDMEKPWKEEEKREVL) has biased composition (basic and acidic residues). Positions 1-34 (MSDMEKPWKEEEKREVLAGHARRQAPQAVDKGPV) are disordered. In terms of domain architecture, Peptidase S53 spans 193 to 546 (AYTPLDVAQA…IRLLQALLPS (354 aa)). Active-site charge relay system residues include Glu-266, Asp-270, and Ser-466. 5 residues coordinate Ca(2+): Asp-504, Ile-505, Gly-522, Gly-524, and Asp-526.

As to quaternary structure, forms monomeric and dimeric crystals. Requires Ca(2+) as cofactor. In terms of processing, autocatalytically processed.

Its subcellular location is the secreted. It carries out the reaction The enzyme preferentially hydrolyzes peptides having an Ala or Pro residue at P2 position and prefers such charged amino acid residues as Glu or Arg at the P2' position. In the oxidized insulin B chain, kumamolysin preferentially cleaves between Leu(15) and Tyr(16).. With respect to regulation, inactivated at 22.4 and 37 degrees Celsius, but not at 60 degrees Celsius, by aldehyde-type inhibitors such as acetyl-Ile-Ala-Phe-CHO and acetyl-Ile-Pro-Phe-CHO. Insensitive to the known carboxyl proteinase inhibitors pepstatin, diazoacetyl-DL-norleucine methyl ester (DAN) and 1,2-epoxy-3-(p-nitrophenoxy)propane (EPNP). Not inhibited by Ala-Ala-Phe-chloromethylketone, an inhibitor of the human tripeptidyl-peptidase 1. Its function is as follows. Thermostable pepstatin-insensitive serine-carboxyl proteinase. Preferentially hydrolyzes synthetic peptides having an Ala or Pro residue at the P2 position and charged amino acids such as Glu or Arg at the P2' position. In vitro, specifically hydrolyzes the Leu-15-Tyr-16 peptide bond in oxidized insulin B-chain. Additional cleavage of oxidized insulin B-chain at Phe-25-Tyr-26 is detected at a considerably lower rate. Can hydrolyze collagen and the chromogenic substrate azocoll. Shows lower activity with albumin and casein. Shows very weak tripeptidyl peptidase activity. This is Kumamolisin from Bacillus sp. (strain MN-32).